A 295-amino-acid polypeptide reads, in one-letter code: Sulfotransferase 1 family member D1 (295 aa).

Position 48 to 53 (48 to 53 (KSGTTW)) interacts with 3'-phosphoadenylyl sulfate. Residues Phe81 and 106-108 (KTH) contribute to the substrate site. The Proton acceptor role is filled by His108. 3'-phosphoadenylyl sulfate is bound by residues Arg130 and Ser138. A substrate-binding site is contributed by Phe142. Residues Tyr193, Ser227, and 257–259 (RKG) each bind 3'-phosphoadenylyl sulfate.

The protein belongs to the sulfotransferase 1 family.

The protein resides in the cytoplasm. Its function is as follows. Sulfotransferase with broad substrate specificity that utilizes 3'-phospho-5'-adenylyl sulfate (PAPS) as sulfonate donor to catalyze the sulfate conjugation of catecholamines, such as dopamine, prostaglandins, leukotriene E4, drugs and xenobiotic compounds. Has sulfotransferase activity towards p-nitrophenol, 2-naphthylamine and minoxidil (in vitro). Sulfonation increases the water solubility of most compounds, and therefore their renal excretion, but it can also result in bioactivation to form active metabolites. This is Sulfotransferase 1 family member D1 (Sult1d1) from Rattus norvegicus (Rat).